The following is a 1693-amino-acid chain: Latrophilin Cirl (1693 aa).

At 1–753 the chain is on the extracellular side; sequence MLPTILSISY…LFTMFDGNMR (753 aa). An SUEL-type lectin domain is found at 25–114; sequence ACEGKKLTIE…KYLEAHYQCI (90 aa). The N-linked (GlcNAc...) asparagine glycan is linked to asparagine 142. Polar residues-rich tracts occupy residues 185–198 and 256–265; these read TAVT…STTA and NVTSPSNTRI. The disordered stretch occupies residues 185–299; that stretch reads TAVTHSTPWS…PGTAASGSVA (115 aa). An N-linked (GlcNAc...) asparagine glycan is attached at asparagine 256. Residues 275-299 show a composition bias toward low complexity; sequence DDGTLLTTKSSPNRPPGTAASGSVA. Asparagine 301, asparagine 340, asparagine 397, asparagine 641, asparagine 689, and asparagine 716 each carry an N-linked (GlcNAc...) asparagine glycan. Residues 375–399 form a disordered region; sequence YDEYDDDASSTTPAPSGGDCLHNSS. One can recognise a GAIN-B domain in the interval 564–740; that stretch reads KKSKIYSSVV…AILMDVVDEH (177 aa). Disulfide bonds link cysteine 695–cysteine 722 and cysteine 710–cysteine 724. The GPS stretch occupies residues 695-740; it reads CVFWNYIDHAWSANGCSLESTNRTHSVCSCNHLTNFAILMDVVDEH. The helical transmembrane segment at 754 to 774 threads the bilayer; the sequence is IFIYISIGICVVFIVIALLTL. Topologically, residues 775 to 787 are cytoplasmic; that stretch reads KLFNGVFVKSART. Residues 788 to 808 traverse the membrane as a helical segment; that stretch reads SIYTSIYLCLLAIELLFLLGI. Residues 809–814 are Extracellular-facing; the sequence is EQTETS. The chain crosses the membrane as a helical span at residues 815-835; the sequence is IFCGFITIFLHCAILSGTAWF. The Cytoplasmic segment spans residues 836–861; sequence CYEAFHSYSTLTSDELLLEVDQTPKV. Residues 862-882 traverse the membrane as a helical segment; the sequence is NCYYLLSYGLSLSVVAISLVI. The Extracellular portion of the chain corresponds to 883–906; that stretch reads DPSTYTQNDYCVLMEANALFYATF. A helical transmembrane segment spans residues 907–927; that stretch reads VVPVLVFFVAAIGYTFLSWII. The Cytoplasmic portion of the chain corresponds to 928–954; the sequence is MCRKSRTGLKTKEHTRLASVRFDIRCS. The chain crosses the membrane as a helical span at residues 955–975; that stretch reads FVFLLLLSAVWCSAYFYLRGA. At 976 to 985 the chain is on the extracellular side; that stretch reads KMDDDTADVY. A helical membrane pass occupies residues 986–1006; it reads GYCFICFNTLLGLYIFVFHCI. The Cytoplasmic segment spans residues 1007–1693; the sequence is QNEKIRREYR…VRCYLEPLAK (687 aa). Serine 1142 is modified (phosphoserine). Disordered stretches follow at residues 1156-1194, 1220-1247, 1294-1319, 1433-1521, and 1601-1673; these read HKQQ…LKTP, KPNS…LHSR, QQQL…AEQH, GGGS…SDER, and LAVN…QQRH. Residues serine 1239 and serine 1246 each carry the phosphoserine modification. Residues 1294–1309 are compositionally biased toward low complexity; the sequence is QQQLRRQQLHQQQQQL. Phosphoserine occurs at positions 1310 and 1311. Over residues 1439–1464 the composition is skewed to low complexity; the sequence is GGSVSSRSQQQQLKKQQQQQSLAQQR. 2 stretches are compositionally biased toward acidic residues: residues 1472-1486 and 1496-1507; these read DDDD…EEAT and CDEDEEEDESDL. A compositionally biased stretch (basic and acidic residues) spans 1508-1521; the sequence is EHDAHGLPPQSDER. Positions 1630-1655 are enriched in low complexity; it reads LQKLSPQSTTSSSSHTSHSNPNLHPH. Over residues 1656-1672 the composition is skewed to basic residues; that stretch reads QLTHPHPHQHPPHHQQR.

It belongs to the G-protein coupled receptor 2 family. LN-TM7 subfamily. As to quaternary structure, forms a heterodimer, consisting of a large extracellular region non-covalently linked to a seven-transmembrane moiety. In terms of processing, proteolytically cleaved into 2 subunits, an extracellular subunit and a seven-transmembrane subunit.

The protein localises to the cell membrane. The sequence is that of Latrophilin Cirl from Drosophila sechellia (Fruit fly).